The sequence spans 120 residues: Aspartate 1-decarboxylase (120 aa).

Serine 25 acts as the Schiff-base intermediate with substrate; via pyruvic acid in catalysis. A Pyruvic acid (Ser) modification is found at serine 25. Residue threonine 57 coordinates substrate. Tyrosine 58 serves as the catalytic Proton donor. Substrate is bound at residue 73–75 (GAA).

This sequence belongs to the PanD family. Heterooctamer of four alpha and four beta subunits. Pyruvate is required as a cofactor. Is synthesized initially as an inactive proenzyme, which is activated by self-cleavage at a specific serine bond to produce a beta-subunit with a hydroxyl group at its C-terminus and an alpha-subunit with a pyruvoyl group at its N-terminus.

The protein localises to the cytoplasm. It catalyses the reaction L-aspartate + H(+) = beta-alanine + CO2. It participates in cofactor biosynthesis; (R)-pantothenate biosynthesis; beta-alanine from L-aspartate: step 1/1. Its function is as follows. Catalyzes the pyruvoyl-dependent decarboxylation of aspartate to produce beta-alanine. In Cupriavidus necator (strain ATCC 17699 / DSM 428 / KCTC 22496 / NCIMB 10442 / H16 / Stanier 337) (Ralstonia eutropha), this protein is Aspartate 1-decarboxylase.